The chain runs to 1149 residues: DNA-directed RNA polymerase III subunit RPC2 (1149 aa).

Positions 1095, 1098, 1107, and 1110 each coordinate Zn(2+). Residues 1095–1110 (CDKCGLMGYSGWCTTC) form a C4-type zinc finger.

The protein belongs to the RNA polymerase beta chain family. In terms of assembly, component of the RNA polymerase III (Pol III) complex consisting of 17 subunits.

It is found in the nucleus. It carries out the reaction RNA(n) + a ribonucleoside 5'-triphosphate = RNA(n+1) + diphosphate. In terms of biological role, DNA-dependent RNA polymerase catalyzes the transcription of DNA into RNA using the four ribonucleoside triphosphates as substrates. Second largest core component of RNA polymerase III which synthesizes small RNAs, such as 5S rRNA and tRNAs. Proposed to contribute to the polymerase catalytic activity and forms the polymerase active center together with the largest subunit. Pol III is composed of mobile elements and RPC2 is part of the core element with the central large cleft and probably a clamp element that moves to open and close the cleft. This is DNA-directed RNA polymerase III subunit RPC2 (RET1) from Saccharomyces cerevisiae (strain ATCC 204508 / S288c) (Baker's yeast).